A 522-amino-acid polypeptide reads, in one-letter code: Glutamate--cysteine ligase (522 aa).

Belongs to the glutamate--cysteine ligase type 1 family. Type 1 subfamily.

It carries out the reaction L-cysteine + L-glutamate + ATP = gamma-L-glutamyl-L-cysteine + ADP + phosphate + H(+). It functions in the pathway sulfur metabolism; glutathione biosynthesis; glutathione from L-cysteine and L-glutamate: step 1/2. In Shewanella pealeana (strain ATCC 700345 / ANG-SQ1), this protein is Glutamate--cysteine ligase.